Consider the following 523-residue polypeptide: Butyrophilin subfamily 2 member A2 (523 aa).

The signal sequence occupies residues 1–32 (MEPAAALHFSLPASLLLLLLLLLLSLCALVSA). The Extracellular portion of the chain corresponds to 33–265 (QFTVVGPANP…AVILTASPWM (233 aa)). The region spanning 34 to 145 (FTVVGPANPI…SYDEAILRLV (112 aa)) is the Ig-like V-type domain. Residues N50, N118, N220, and N226 are each glycosylated (N-linked (GlcNAc...) asparagine). Cysteines 55 and 129 form a disulfide. In terms of domain architecture, Ig-like C2-type spans 153-234 (PLIEIKAQED…VNNTLLGQEK (82 aa)). A helical transmembrane segment spans residues 266–286 (VSMTVILAVFIIFMAVSICCI). Residues 286 to 321 (IKKLQREKKILSGEKKVEQEEKEIAQQLQEELRWRR) are a coiled coil. Residues 287–523 (KKLQREKKIL…LHRVGTHQSL (237 aa)) lie on the Cytoplasmic side of the membrane. Residues 309-502 (IAQQLQEELR…IFICPALTGA (194 aa)) enclose the B30.2/SPRY domain.

It belongs to the immunoglobulin superfamily. BTN/MOG family. N-glycosylated. Highly expressed in brain, bone marrow, small intestine, muscle, spleen and pancreas. Moderate expression was seen in lung, liver and kidney.

It localises to the membrane. In terms of biological role, inhibits the proliferation of CD4 and CD8 T-cells activated by anti-CD3 antibodies, T-cell metabolism and IL2 and IFNG secretion. This chain is Butyrophilin subfamily 2 member A2 (BTN2A2), found in Homo sapiens (Human).